Here is a 757-residue protein sequence, read N- to C-terminus: Dapper homolog 2 (757 aa).

Residues 1-281 (MWAPSGQGPA…QSPLFALPKE (281 aa)) are inhibition of Nodal signaling. Residues 55–107 (RGQELRLEAALTALREQLSRLRRQDAGLKTHLDQLDQQISELQLDVSRSSCEA) adopt a coiled-coil conformation. Disordered regions lie at residues 486 to 540 (RRRV…CSES), 584 to 684 (RWQS…EGCF), and 696 to 728 (AEAGQGGWAWPRVPPQQPSRAPGNTRPPLPPVP). Basic and acidic residues-rich tracts occupy residues 505-516 (ERQRVTERDPSR) and 631-644 (ACARCESDPSEHSA). A compositionally biased stretch (polar residues) spans 645–656 (DCTSLYHSTIAE). The span at 664 to 673 (SDHTANRFGD) shows a compositional bias: basic and acidic residues. The PDZ-binding signature appears at 754 to 757 (MTMV).

This sequence belongs to the dapper family. As to quaternary structure, can form homodimers and heterodimers with DACT1 or DACT3. Interacts with CSNK1D, PKA catalytic subunit, PKC-type kinase, CSNK2B, DVL1, DVL2, DVL3, VANGL1, VANGL2, TGFBR1, CTNNB1, CTNND2, CTNND1, LEF1, TCF7, TCF7L1 and HDAC1. In terms of tissue distribution, expressed in kidney (inner medullary collecting duct). Expressed in epidermal keratinocytes and hair follicles.

Functionally, involved in regulation of intracellular signaling pathways during development. Negatively regulates the Nodal signaling pathway, possibly by promoting the lysosomal degradation of Nodal receptors, such as TGFBR1. May be involved in control of the morphogenetic behavior of kidney ureteric bud cells by keeping cells epithelial and restraining their mesenchymal character. May play an inhibitory role in the re-epithelialization of skin wounds by attenuating TGF-beta signaling. The polypeptide is Dapper homolog 2 (Dact2) (Mus musculus (Mouse)).